The following is a 210-amino-acid chain: MAKNKFSKDWIHQHINDPYVKLAQQKGYRARAAFKLLEILDAEKLMRRGDIVVDLGSAPGSWSQVARERLAGPGGAVDGRIIALDLLPMEPVAGVEFIQGDFREEAVLEQLARMVEGQPVDLVISDMAPNLSGVGVADSARIQHVCELALEFACAHLKPNGALIVKAFHGSGFSQIVQSYKQRFKRVVERKPKASRDKSSETFLVARDLK.

S-adenosyl-L-methionine is bound by residues glycine 60, tryptophan 62, aspartate 85, aspartate 101, and aspartate 126. Lysine 166 (proton acceptor) is an active-site residue. The span at 191–200 (KPKASRDKSS) shows a compositional bias: basic and acidic residues. The segment at 191–210 (KPKASRDKSSETFLVARDLK) is disordered.

The protein belongs to the class I-like SAM-binding methyltransferase superfamily. RNA methyltransferase RlmE family.

It is found in the cytoplasm. It catalyses the reaction uridine(2552) in 23S rRNA + S-adenosyl-L-methionine = 2'-O-methyluridine(2552) in 23S rRNA + S-adenosyl-L-homocysteine + H(+). Specifically methylates the uridine in position 2552 of 23S rRNA at the 2'-O position of the ribose in the fully assembled 50S ribosomal subunit. The protein is Ribosomal RNA large subunit methyltransferase E of Bordetella bronchiseptica (strain ATCC BAA-588 / NCTC 13252 / RB50) (Alcaligenes bronchisepticus).